Here is a 398-residue protein sequence, read N- to C-terminus: Succinate--CoA ligase [ADP-forming] subunit beta (398 aa).

Residues 9 to 254 (KAVLREFGVP…ETEEDAKEIE (246 aa)) enclose the ATP-grasp domain. ATP contacts are provided by residues K46, 53–55 (GRG), E109, S112, and E117. 2 residues coordinate Mg(2+): N209 and D223. Substrate-binding positions include N274 and 331–333 (GIM).

It belongs to the succinate/malate CoA ligase beta subunit family. In terms of assembly, heterotetramer of two alpha and two beta subunits. Mg(2+) serves as cofactor.

It catalyses the reaction succinate + ATP + CoA = succinyl-CoA + ADP + phosphate. The enzyme catalyses GTP + succinate + CoA = succinyl-CoA + GDP + phosphate. It participates in carbohydrate metabolism; tricarboxylic acid cycle; succinate from succinyl-CoA (ligase route): step 1/1. Succinyl-CoA synthetase functions in the citric acid cycle (TCA), coupling the hydrolysis of succinyl-CoA to the synthesis of either ATP or GTP and thus represents the only step of substrate-level phosphorylation in the TCA. The beta subunit provides nucleotide specificity of the enzyme and binds the substrate succinate, while the binding sites for coenzyme A and phosphate are found in the alpha subunit. The protein is Succinate--CoA ligase [ADP-forming] subunit beta of Rhodopseudomonas palustris (strain ATCC BAA-98 / CGA009).